The sequence spans 596 residues: NADH-quinone oxidoreductase subunit C/D (596 aa).

The interval 1–186 (MTDLTAQDAA…DPFELTKAKQ (186 aa)) is NADH dehydrogenase I subunit C. Residues 210–596 (DFMFLNLGPN…IDFVMSDVDR (387 aa)) are NADH dehydrogenase I subunit D.

This sequence in the N-terminal section; belongs to the complex I 30 kDa subunit family. In the C-terminal section; belongs to the complex I 49 kDa subunit family. NDH-1 is composed of 13 different subunits. Subunits NuoB, CD, E, F, and G constitute the peripheral sector of the complex.

The protein resides in the cell inner membrane. It carries out the reaction a quinone + NADH + 5 H(+)(in) = a quinol + NAD(+) + 4 H(+)(out). NDH-1 shuttles electrons from NADH, via FMN and iron-sulfur (Fe-S) centers, to quinones in the respiratory chain. The immediate electron acceptor for the enzyme in this species is believed to be ubiquinone. Couples the redox reaction to proton translocation (for every two electrons transferred, four hydrogen ions are translocated across the cytoplasmic membrane), and thus conserves the redox energy in a proton gradient. This chain is NADH-quinone oxidoreductase subunit C/D, found in Salmonella dublin (strain CT_02021853).